Here is a 148-residue protein sequence, read N- to C-terminus: MCDPTSESQLWRSSSQIPSPCLICRLDHIVMTVKNIEDTTMFYSKILGMEVTTFKGNRKALCFGDQKFNLHEVGKEFDPKAAHPVPGSLDVCLITEAPLEEVIERLKAFDVPIEEGPVFRTGAKGPILSIYFRDPDRNLLEVSSYVTS.

The VOC domain maps to 25–145; that stretch reads RLDHIVMTVK…DRNLLEVSSY (121 aa).

The protein belongs to the glyoxalase I family.

The protein is Glyoxalase domain-containing protein 5 (Glod5) of Mus musculus (Mouse).